The following is a 352-amino-acid chain: Minor capsid protein P14 (352 aa).

Residues 122-214 are disordered; that stretch reads YNEPAPKPKP…RPARRCDENP (93 aa). A compositionally biased stretch (basic residues) spans 129-145; that stretch reads PKPKPKPKPAPKPKPAP. The segment covering 146–204 has biased composition (pro residues); that stretch reads KPKPAPKPAPKPAPKPAPKPAPKPAPKPAPKPAPEPAPEPAPEPAPKPAPEPAPEPAPI. A hydrophobic region spans residues 244–264; sequence WWLWGGIAILVIVLMIGGYFI.

Interacts with the major capsid protein.

The protein localises to the virion. Its function is as follows. One of the minor capsid proteins that constitute a network internal to the major capsid proteins and outside the lipid membrane. The minor capsid protein P14 does not serve a cross-linking function between neighboring capsomers, it may play a role in the viral capsid assembly. This Chlorella (PBCV-1) protein is Minor capsid protein P14.